Here is a 262-residue protein sequence, read N- to C-terminus: Indole-3-glycerol phosphate synthase (262 aa).

This sequence belongs to the TrpC family.

It catalyses the reaction 1-(2-carboxyphenylamino)-1-deoxy-D-ribulose 5-phosphate + H(+) = (1S,2R)-1-C-(indol-3-yl)glycerol 3-phosphate + CO2 + H2O. It functions in the pathway amino-acid biosynthesis; L-tryptophan biosynthesis; L-tryptophan from chorismate: step 4/5. This is Indole-3-glycerol phosphate synthase from Staphylococcus epidermidis (strain ATCC 12228 / FDA PCI 1200).